We begin with the raw amino-acid sequence, 233 residues long: MSSLESARADLALLILYLNKAEARDKICRAIQYGSKFVSNGQPGPAQNVDKSTSLARKVFRLFKFVNDLHALISPPAKGTPLPLILLGKSKNALLSTFLFLDQIVWAGRTGIYKNKERAEFLSKIAFYCFLGSNTCTSIIEVAELQRLSKSMKKLEKELKHQELLKNEQYQMKLQKCNERRLALIKSSLDIVVAIGLLQLAPKKVTPRVTGAFGFASSLIACYQLLPAPAKSK.

Residues 1–92 lie on the Cytoplasmic side of the membrane; sequence MSSLESARAD…PLILLGKSKN (92 aa). The helical transmembrane segment at 93 to 113 threads the bilayer; sequence ALLSTFLFLDQIVWAGRTGIY. Topologically, residues 114–206 are lumenal; it reads KNKERAEFLS…LLQLAPKKVT (93 aa). Residues 207–226 traverse the membrane as a helical segment; sequence PRVTGAFGFASSLIACYQLL.

Belongs to the peroxin-11 family. As to expression, expressed in seedlings, roots, shoots, leaf sheaths, flag leaf, panicles, spikelets, and endosperm.

Its subcellular location is the peroxisome membrane. Involved in peroxisomal proliferation. The chain is Peroxisomal membrane protein 11-5 (PEX11-5) from Oryza sativa subsp. japonica (Rice).